Reading from the N-terminus, the 287-residue chain is Protease HtpX (287 aa).

The next 2 membrane-spanning stretches (helical) occupy residues 4–24 and 33–53; these read IFLL…VMSI and GGLL…SLAI. Position 139 (His139) interacts with Zn(2+). Residue Glu140 is part of the active site. His143 serves as a coordination point for Zn(2+). A run of 2 helical transmembrane segments spans residues 154-174 and 195-215; these read LIQG…AGII and AVVF…VAYF. Glu220 contributes to the Zn(2+) binding site.

This sequence belongs to the peptidase M48B family. Requires Zn(2+) as cofactor.

The protein resides in the cell inner membrane. This is Protease HtpX from Shewanella baltica (strain OS185).